We begin with the raw amino-acid sequence, 279 residues long: MAEEQGRGRHGPDPAPRPQKPPVEVLASSSGAEGPPLMRKRSSKREKGLRGSRKGPSSSGEQTPMQGPEAPGSSKNPSRTREGQEGPIPSASGLAPRRQSHRHRPGPQHDAAQRMYGPLLNRIFGKDRELGPEELDELQAAFEEFDTDHDGYIGYRDLGECMRTLGYMPTEMELIEVSQHVKMRMGGRVDFEEFVEMMGPKLREETAHMLGLRELRIAFREFDRDRDGRITVAELREAAPALLGEPLVGPELEEMLQEVDLNGDGTVDFNEFVMMLSRH.

Over residues Met-1–Pro-12 the composition is skewed to basic and acidic residues. Residues Met-1–Arg-114 form a disordered region. At Ser-42 the chain carries Phosphoserine. The segment covering Gly-55 to Met-65 has biased composition (polar residues). EF-hand domains lie at Glu-133 to Met-168, Gly-187 to Glu-204, Leu-210 to Glu-245, and Leu-247 to His-279. Ca(2+) is bound by residues Asp-146, Asp-148, Asp-150, Tyr-152, and Asp-157. Ca(2+) contacts are provided by Asp-223, Asp-225, Asp-227, Arg-229, Glu-234, Asp-260, Asn-262, Asp-264, Thr-266, and Glu-271.

Interacts with CACNA1F and CACNA1D (via IQ domain) in a calcium independent manner. Interacts (via N-terminus) with UNC119. In terms of processing, phosphorylated. Phosphorylation levels change with the light conditions and regulate the activity. As to expression, expressed in the retina.

It localises to the cytoplasm. Its subcellular location is the presynapse. In terms of biological role, may play a role in normal synaptic function, probably through regulation of Ca(2+) influx and neurotransmitter release in photoreceptor synaptic terminals and in auditory transmission. Modulator of CACNA1F, shifting the activation range to more hyperpolarized voltages. In Bos taurus (Bovine), this protein is Calcium-binding protein 4 (CABP4).